The primary structure comprises 200 residues: Adenylate kinase (200 aa).

10 to 15 (GAGKGT) serves as a coordination point for ATP. Residues 30–59 (STGDMLRAAVAAGTPVGLEAKSIMESGGLV) form an NMP region. AMP is bound by residues threonine 31, arginine 36, 57–59 (GLV), 85–88 (GFPR), and glutamine 92. The segment at 126–142 (KRAEETAARGQPVRKDD) is LID. An ATP-binding site is contributed by arginine 127. Positions 139 and 150 each coordinate AMP. An ATP-binding site is contributed by lysine 178.

The protein belongs to the adenylate kinase family. As to quaternary structure, monomer.

It is found in the cytoplasm. The catalysed reaction is AMP + ATP = 2 ADP. It participates in purine metabolism; AMP biosynthesis via salvage pathway; AMP from ADP: step 1/1. Catalyzes the reversible transfer of the terminal phosphate group between ATP and AMP. Plays an important role in cellular energy homeostasis and in adenine nucleotide metabolism. The chain is Adenylate kinase from Methylorubrum populi (strain ATCC BAA-705 / NCIMB 13946 / BJ001) (Methylobacterium populi).